The sequence spans 98 residues: NADH-ubiquinone oxidoreductase chain 4L (98 aa).

The next 3 membrane-spanning stretches (helical) occupy residues 1-21 (MTPV…GLAF), 29-49 (ALLC…LWAL), and 58-78 (VAPM…LALL).

It belongs to the complex I subunit 4L family.

It localises to the mitochondrion membrane. It catalyses the reaction a ubiquinone + NADH + 5 H(+)(in) = a ubiquinol + NAD(+) + 4 H(+)(out). Its function is as follows. Core subunit of the mitochondrial membrane respiratory chain NADH dehydrogenase (Complex I) which catalyzes electron transfer from NADH through the respiratory chain, using ubiquinone as an electron acceptor. Part of the enzyme membrane arm which is embedded in the lipid bilayer and involved in proton translocation. The sequence is that of NADH-ubiquinone oxidoreductase chain 4L (MT-ND4L) from Salmo salar (Atlantic salmon).